Here is a 74-residue protein sequence, read N- to C-terminus: Putative membrane protein insertion efficiency factor (74 aa).

It belongs to the UPF0161 family.

Its subcellular location is the cell inner membrane. Could be involved in insertion of integral membrane proteins into the membrane. This chain is Putative membrane protein insertion efficiency factor, found in Blochmanniella floridana.